Consider the following 117-residue polypeptide: Conotoxin vil14.2 (117 aa).

Residues 1–22 (MGFRVLVLVVMATTFALPFTFF) form the signal peptide. Residues 23 to 90 (EEPGRSPFRP…FAELSVGQRR (68 aa)) constitute a propeptide that is removed on maturation. The segment at 53 to 77 (RADGQPPDMRQPEMRRPEMRRPEVR) is disordered. Residues 62 to 77 (RQPEMRRPEMRRPEVR) are compositionally biased toward basic and acidic residues. 2 cysteine pairs are disulfide-bonded: Cys96/Cys116 and Cys100/Cys112.

Belongs to the conotoxin R superfamily. In terms of tissue distribution, expressed by the venom duct.

Its subcellular location is the secreted. In Conus villepinii (Villepin's cone), this protein is Conotoxin vil14.2.